The following is a 36-amino-acid chain: Protein usd (36 aa).

Its function is as follows. Required for translation of SpoIIID. The chain is Protein usd (usd) from Bacillus subtilis (strain 168).